Here is a 225-residue protein sequence, read N- to C-terminus: MRANLIEIFESIQGEGFYIGVRQLFVRFAGCNLNCYYCDTPKTSENCLDLTANRTLKNPVSAEYVQGRIDSSKVHSVCFTGGEPMLQAEFIASLSKTHPFYLESNMTLPEKAKKLKFCDYVAGDLKVREAGLKNYDEVFQKTVKCFKVLRNTRRRKTFCKIVLPDKFDADEVLNSAYEIKNYVFGFVLQPVFGSRVEKILKLQKRMIDFADTRVIPQVHKYLGVR.

Residues 12–14 (IQG) and Arg-27 each bind substrate. Residues 18 to 225 (YIGVRQLFVR…PQVHKYLGVR (208 aa)) enclose the Radical SAM core domain. [4Fe-4S] cluster is bound by residues Cys-31, Cys-35, and Cys-38. Thr-40 serves as a coordination point for Mg(2+). Residue Thr-80 coordinates substrate. Gly-82 contacts S-adenosyl-L-methionine.

The protein belongs to the radical SAM superfamily. 7-carboxy-7-deazaguanine synthase family. In terms of assembly, homodimer. It depends on [4Fe-4S] cluster as a cofactor. Requires S-adenosyl-L-methionine as cofactor. The cofactor is Mg(2+).

The enzyme catalyses 6-carboxy-5,6,7,8-tetrahydropterin + H(+) = 7-carboxy-7-deazaguanine + NH4(+). It functions in the pathway purine metabolism; 7-cyano-7-deazaguanine biosynthesis. Catalyzes the complex heterocyclic radical-mediated conversion of 6-carboxy-5,6,7,8-tetrahydropterin (CPH4) to 7-carboxy-7-deazaguanine (CDG), a step common to the biosynthetic pathways of all 7-deazapurine-containing compounds. In Archaeoglobus fulgidus (strain ATCC 49558 / DSM 4304 / JCM 9628 / NBRC 100126 / VC-16), this protein is 7-carboxy-7-deazaguanine synthase.